Consider the following 639-residue polypeptide: Chaperone protein DnaK (639 aa).

Threonine 198 bears the Phosphothreonine; by autocatalysis mark. The tract at residues 605-624 (SQAQGGAETNAGKQANAAAD) is disordered.

This sequence belongs to the heat shock protein 70 family.

In terms of biological role, acts as a chaperone. The protein is Chaperone protein DnaK of Shewanella putrefaciens (strain CN-32 / ATCC BAA-453).